The primary structure comprises 338 residues: tRNA N6-adenosine threonylcarbamoyltransferase (338 aa).

The Fe cation site is built by histidine 110 and histidine 114. Substrate-binding positions include 132–136, aspartate 165, glycine 178, and asparagine 274; that span reads ILSGG. A Fe cation-binding site is contributed by aspartate 298.

The protein belongs to the KAE1 / TsaD family. Fe(2+) is required as a cofactor.

It is found in the cytoplasm. The catalysed reaction is L-threonylcarbamoyladenylate + adenosine(37) in tRNA = N(6)-L-threonylcarbamoyladenosine(37) in tRNA + AMP + H(+). In terms of biological role, required for the formation of a threonylcarbamoyl group on adenosine at position 37 (t(6)A37) in tRNAs that read codons beginning with adenine. Is involved in the transfer of the threonylcarbamoyl moiety of threonylcarbamoyl-AMP (TC-AMP) to the N6 group of A37, together with TsaE and TsaB. TsaD likely plays a direct catalytic role in this reaction. The chain is tRNA N6-adenosine threonylcarbamoyltransferase from Borrelia hermsii (strain HS1 / DAH).